The chain runs to 110 residues: uncharacterized protein (110 aa).

A helical membrane pass occupies residues 29 to 49 (GLAFIFFFLVAFYFFPAFWDL).

The protein localises to the membrane. This is an uncharacterized protein from Saccharomyces cerevisiae (strain ATCC 204508 / S288c) (Baker's yeast).